The following is an 85-amino-acid chain: MAHKKAGGSTRNGRDSEAKRLGVKMYGGQKIIPGNIIVRQRGTQFHAGYGVGMGKDHTLFAKIEGVIKFEVKGAFNRRYVSVVAA.

It belongs to the bacterial ribosomal protein bL27 family.

This is Large ribosomal subunit protein bL27 from Pseudomonas fluorescens (strain SBW25).